The following is a 485-amino-acid chain: Adenosylhomocysteinase (485 aa).

Substrate is bound by residues Thr-60, Asp-146, and Glu-208. 209 to 211 contacts NAD(+); it reads TTT. Substrate is bound by residues Lys-238 and Asp-242. NAD(+) contacts are provided by residues Asn-243, 272 to 277, Glu-295, Asn-330, 351 to 353, and Asn-399; these read GYGDVG and IGH.

It belongs to the adenosylhomocysteinase family. NAD(+) serves as cofactor.

It localises to the cytoplasm. It catalyses the reaction S-adenosyl-L-homocysteine + H2O = L-homocysteine + adenosine. It participates in amino-acid biosynthesis; L-homocysteine biosynthesis; L-homocysteine from S-adenosyl-L-homocysteine: step 1/1. May play a key role in the regulation of the intracellular concentration of adenosylhomocysteine. This is Adenosylhomocysteinase from Streptomyces avermitilis (strain ATCC 31267 / DSM 46492 / JCM 5070 / NBRC 14893 / NCIMB 12804 / NRRL 8165 / MA-4680).